Here is a 177-residue protein sequence, read N- to C-terminus: Thymidine kinase (177 aa).

Residue 11–18 (GPMFSGKS) participates in ATP binding. The active-site Proton acceptor is the Glu-83. Phe-113 serves as a coordination point for substrate. Zn(2+)-binding residues include Cys-138 and Cys-141. 157-161 (IEIIG) lines the substrate pocket. The Zn(2+) site is built by Cys-170 and Cys-173.

The protein belongs to the thymidine kinase family. As to quaternary structure, homotetramer. Two molecules of substrate bind to each enzyme tetramer.

The enzyme catalyses thymidine + ATP = dTMP + ADP + H(+). In terms of biological role, phosphorylates thymidine and thymidine analogs, such as azidothymidine (AZT). Part of the salvage pathway for pyrimidine deoxyribonucleotide synthesis. The sequence is that of Thymidine kinase (OPG101) from Variola virus.